Reading from the N-terminus, the 553-residue chain is Ubiquitin carboxyl-terminal hydrolase 17-like protein 15 (553 aa).

Positions 80–375 constitute a USP domain; the sequence is AGLQNMGNTC…QAYVLFYIQK (296 aa). The Nucleophile role is filled by Cys-89. The Proton acceptor role is filled by His-334. Composition is skewed to basic and acidic residues over residues 382–392 and 398–413; these read SESVSRGREPR and DTDR…RDHP. Disordered regions lie at residues 382–413 and 491–524; these read SESV…RDHP and STTP…HSKR. Residues 496-505 are compositionally biased toward polar residues; sequence HQESMNTGTL. Residues 510-524 are compositionally biased toward basic residues; the sequence is GRARRSKGKNKHSKR.

This sequence belongs to the peptidase C19 family. USP17 subfamily.

Its subcellular location is the nucleus. The protein localises to the endoplasmic reticulum. It catalyses the reaction Thiol-dependent hydrolysis of ester, thioester, amide, peptide and isopeptide bonds formed by the C-terminal Gly of ubiquitin (a 76-residue protein attached to proteins as an intracellular targeting signal).. Its function is as follows. Deubiquitinating enzyme that removes conjugated ubiquitin from specific proteins to regulate different cellular processes that may include cell proliferation, progression through the cell cycle, apoptosis, cell migration, and the cellular response to viral infection. The sequence is that of Ubiquitin carboxyl-terminal hydrolase 17-like protein 15 (USP17L15) from Homo sapiens (Human).